The primary structure comprises 314 residues: 3'-5' exoribonuclease YhaM (314 aa).

Residues 163–279 (HVVSMLDLAK…LHYIDNLDAK (117 aa)) form the HD domain.

It belongs to the YhaM family.

Shows a 3'-5' exoribonuclease activity. This is 3'-5' exoribonuclease YhaM from Bacillus thuringiensis (strain Al Hakam).